The sequence spans 279 residues: 3-methyl-2-oxobutanoate hydroxymethyltransferase (279 aa).

The Mg(2+) site is built by Asp43 and Asp82. 3-methyl-2-oxobutanoate contacts are provided by residues 43–44 (DS), Asp82, and Lys112. Residue Glu114 participates in Mg(2+) binding. Glu181 (proton acceptor) is an active-site residue.

Belongs to the PanB family. As to quaternary structure, homodecamer; pentamer of dimers. It depends on Mg(2+) as a cofactor.

It is found in the cytoplasm. It catalyses the reaction 3-methyl-2-oxobutanoate + (6R)-5,10-methylene-5,6,7,8-tetrahydrofolate + H2O = 2-dehydropantoate + (6S)-5,6,7,8-tetrahydrofolate. It participates in cofactor biosynthesis; (R)-pantothenate biosynthesis; (R)-pantoate from 3-methyl-2-oxobutanoate: step 1/2. Catalyzes the reversible reaction in which hydroxymethyl group from 5,10-methylenetetrahydrofolate is transferred onto alpha-ketoisovalerate to form ketopantoate. In Geobacillus thermodenitrificans (strain NG80-2), this protein is 3-methyl-2-oxobutanoate hydroxymethyltransferase.